The chain runs to 717 residues: Cleavage stimulation factor subunit 3 (717 aa).

Residue S2 is modified to N-acetylserine. 9 HAT repeats span residues 45–77 (QPID…AEIK), 79–110 (KNYD…YVRE), 117–152 (SYKE…FLKG), 163–196 (QRIT…YEEG), 221–261 (KEYE…WEKS), 271–303 (LITK…YLEQ), 319–352 (LFSD…YEES), 354–387 (MKYE…FARR), and 458–494 (NEDN…FESN). The interval 683–704 (AVKRPNEDSDEDEEKGAVVPPV) is disordered. S691 carries the phosphoserine modification.

In terms of assembly, homodimer. The CSTF complex is composed of CSTF1 (50 kDa subunit), CSTF2 (64 kDa subunit) and CSTF3 (77 kDa subunit). CSTF3 directly interacts with CSTF1 and CSTF2. Interacts with FIP1L1.

The protein resides in the nucleus. Functionally, one of the multiple factors required for polyadenylation and 3'-end cleavage of mammalian pre-mRNAs. This chain is Cleavage stimulation factor subunit 3 (Cstf3), found in Mus musculus (Mouse).